A 66-amino-acid chain; its full sequence is MADMPSVEPTRIDPKLLELLVCPLTKGRLEYDSARQELISRSAKLAYPIRDGIPIMLPEEARPLAD.

This sequence belongs to the UPF0434 family.

In Methylobacterium nodulans (strain LMG 21967 / CNCM I-2342 / ORS 2060), this protein is UPF0434 protein Mnod_1613.